We begin with the raw amino-acid sequence, 269 residues long: Putative pyruvate, phosphate dikinase regulatory protein (269 aa).

147-154 lines the ADP pocket; sequence GLSRTSKT.

The protein belongs to the pyruvate, phosphate/water dikinase regulatory protein family. PDRP subfamily.

The enzyme catalyses N(tele)-phospho-L-histidyl/L-threonyl-[pyruvate, phosphate dikinase] + ADP = N(tele)-phospho-L-histidyl/O-phospho-L-threonyl-[pyruvate, phosphate dikinase] + AMP + H(+). It catalyses the reaction N(tele)-phospho-L-histidyl/O-phospho-L-threonyl-[pyruvate, phosphate dikinase] + phosphate + H(+) = N(tele)-phospho-L-histidyl/L-threonyl-[pyruvate, phosphate dikinase] + diphosphate. Functionally, bifunctional serine/threonine kinase and phosphorylase involved in the regulation of the pyruvate, phosphate dikinase (PPDK) by catalyzing its phosphorylation/dephosphorylation. The chain is Putative pyruvate, phosphate dikinase regulatory protein from Clostridium botulinum (strain 657 / Type Ba4).